The sequence spans 1004 residues: 2-oxoglutarate dehydrogenase E1 component (1004 aa).

This sequence belongs to the alpha-ketoglutarate dehydrogenase family. In terms of assembly, homodimer. Part of the 2-oxoglutarate dehydrogenase (OGDH) complex composed of E1 (2-oxoglutarate dehydrogenase), E2 (dihydrolipoamide succinyltransferase) and E3 (dihydrolipoamide dehydrogenase); the complex contains multiple copies of the three enzymatic components (E1, E2 and E3). Requires thiamine diphosphate as cofactor.

The enzyme catalyses N(6)-[(R)-lipoyl]-L-lysyl-[protein] + 2-oxoglutarate + H(+) = N(6)-[(R)-S(8)-succinyldihydrolipoyl]-L-lysyl-[protein] + CO2. In terms of biological role, E1 component of the 2-oxoglutarate dehydrogenase (OGDH) complex which catalyzes the decarboxylation of 2-oxoglutarate, the first step in the conversion of 2-oxoglutarate to succinyl-CoA and CO(2). The protein is 2-oxoglutarate dehydrogenase E1 component of Brucella suis (strain ATCC 23445 / NCTC 10510).